We begin with the raw amino-acid sequence, 439 residues long: Xylose isomerase (439 aa).

Catalysis depends on residues His101 and Asp104. Mg(2+) is bound by residues Glu232, Glu268, His271, Asp296, Asp307, Asp309, and Asp339.

It belongs to the xylose isomerase family. In terms of assembly, homotetramer. Mg(2+) is required as a cofactor.

The protein resides in the cytoplasm. It catalyses the reaction alpha-D-xylose = alpha-D-xylulofuranose. This chain is Xylose isomerase, found in Photorhabdus laumondii subsp. laumondii (strain DSM 15139 / CIP 105565 / TT01) (Photorhabdus luminescens subsp. laumondii).